The following is a 98-amino-acid chain: Small ribosomal subunit protein bS20 (98 aa).

Positions 76–98 are disordered; sequence HPNNGARKKSRLASKLKPIEQTA.

It belongs to the bacterial ribosomal protein bS20 family.

Its function is as follows. Binds directly to 16S ribosomal RNA. This is Small ribosomal subunit protein bS20 from Trichormus variabilis (strain ATCC 29413 / PCC 7937) (Anabaena variabilis).